A 178-amino-acid polypeptide reads, in one-letter code: Caveolin-1 (178 aa).

At Ser2 the chain carries N-acetylserine. At Ser2 the chain carries Phosphoserine. A required for homooligomerization region spans residues 2 to 94 (SGGKYVDSEG…WKASFTTFTV (93 aa)). The Cytoplasmic segment spans residues 2–104 (SGGKYVDSEG…TKYWFYRLLS (103 aa)). Residue Lys5 is modified to N6-acetyllysine; alternate. Lys5 is covalently cross-linked (Glycyl lysine isopeptide (Lys-Gly) (interchain with G-Cter in ubiquitin); alternate). Residue Tyr6 is modified to Phosphotyrosine. The residue at position 9 (Ser9) is a Phosphoserine. Tyr14 bears the Phosphotyrosine; by ABL1 mark. At Tyr25 the chain carries Phosphotyrosine. Residues Lys26, Lys30, Lys39, Lys47, and Lys57 each participate in a glycyl lysine isopeptide (Lys-Gly) (interchain with G-Cter in ubiquitin) cross-link. The tract at residues 82-94 (DGIWKASFTTFTV) is interaction with CAVIN3. Positions 105–125 (AVFGIPMALIWGIYFAIVSFL) form an intramembrane region, helical. At 126–178 (HIWVVVPYIKSFLIEIQCISRVYSIYIHTFCDPLFEAFGKVFSNIRINTQKEI) the chain is on the cytoplasmic side. The interval 131 to 142 (VPYIKSFLIEIQ) is interacts with SPRY1, SPRY2, SPRY3 and SPRY4. S-palmitoyl cysteine attachment occurs at residues Cys143 and Cys156. Positions 149-160 (SIYIHTFCDPLF) are interacts with SPRY1, SPRY2, and SPRY4. The interval 167 to 178 (FSNIRINTQKEI) is interacts with SPRY1, SPRY2, SPRY3 and SPRY4.

Belongs to the caveolin family. Homooligomer. Interacts (via the N-terminus) with DPP4; the interaction is direct. Forms a stable heterooligomeric complex with CAV2 that targets to lipid rafts and drives caveolae formation. Interacts with PACSIN2; this interaction induces membrane tubulation. Interacts with BMX, BTK, CTNNB1, CDH1, GLIPR2, JUP, NOSTRIN, SNAP25 and STX1A. Interacts with SLC7A9. Interacts with TGFBR1. Interacts with CAVIN3 (via leucine-zipper domain) in a cholesterol-sensitive manner. Interacts with CAVIN1. Interacts with EHD2 in a cholesterol-dependent manner. Forms a ternary complex with UBXN6 and VCP; mediates CAV1 targeting to lysosomes for degradation. Interacts with ABCG1; this interaction regulates ABCG1-mediated cholesterol efflux. Interacts with NEU3; this interaction enhances NEU3 sialidase activity within caveola. Interacts (via C-terminus) with SPRY1, SPRY2 (via C-terminus), SPRY3, and SPRY4. In terms of processing, phosphorylated at Tyr-14 by ABL1 in response to oxidative stress. Post-translationally, ubiquitinated. Undergo monoubiquitination and multi- and/or polyubiquitination. Monoubiquitination of N-terminal lysines promotes integration in a ternary complex with UBXN6 and VCP which promotes oligomeric CAV1 targeting to lysosomes for degradation. Ubiquitinated by ZNRF1; leading to degradation and modulation of the TLR4-mediated immune response.

It localises to the golgi apparatus membrane. The protein localises to the cell membrane. It is found in the membrane. Its subcellular location is the caveola. The protein resides in the membrane raft. In terms of biological role, may act as a scaffolding protein within caveolar membranes. Forms a stable heterooligomeric complex with CAV2 that targets to lipid rafts and drives caveolae formation. Mediates the recruitment of CAVIN proteins (CAVIN1/2/3/4) to the caveolae. Interacts directly with G-protein alpha subunits and can functionally regulate their activity. Involved in the costimulatory signal essential for T-cell receptor (TCR)-mediated T-cell activation. Its binding to DPP4 induces T-cell proliferation and NF-kappa-B activation in a T-cell receptor/CD3-dependent manner. Recruits CTNNB1 to caveolar membranes and may regulate CTNNB1-mediated signaling through the Wnt pathway. Negatively regulates TGFB1-mediated activation of SMAD2/3 by mediating the internalization of TGFBR1 from membrane rafts leading to its subsequent degradation. Binds 20(S)-hydroxycholesterol (20(S)-OHC). This Rhinolophus ferrumequinum (Greater horseshoe bat) protein is Caveolin-1 (CAV1).